The sequence spans 172 residues: Translationally-controlled tumor protein (172 aa).

The 172-residue stretch at methionine 1–cysteine 172 folds into the TCTP domain. At serine 46 the chain carries Phosphoserine; by PLK1. At serine 53 the chain carries Phosphoserine. Serine 64 is subject to Phosphoserine; by PLK1. The segment at valine 70 to cysteine 172 is required for reduction of TSC22D1 protein stability.

The protein belongs to the TCTP family. As to quaternary structure, homodimer. Interacts with STEAP3. Interacts with TSC22D1; interaction results in the destabilization of TSC22D1 protein.

The protein localises to the cytoplasm. In terms of biological role, involved in calcium binding and microtubule stabilization. Acts as a negative regulator of TSC22D1-mediated apoptosis, via interaction with and destabilization of TSC22D1 protein. This chain is Translationally-controlled tumor protein (TPT1), found in Bos taurus (Bovine).